Here is a 398-residue protein sequence, read N- to C-terminus: Dual-specificity RNA methyltransferase RlmN (398 aa).

Catalysis depends on Glu-119, which acts as the Proton acceptor. The 240-residue stretch at 125–364 folds into the Radical SAM core domain; it reads DGDRATLCVS…TIVRKTRGDD (240 aa). Cysteines 132 and 369 form a disulfide. [4Fe-4S] cluster is bound by residues Cys-139, Cys-143, and Cys-146. S-adenosyl-L-methionine is bound by residues 193–194, Ser-225, 247–249, and Asn-326; these read GE and SLH. The active-site S-methylcysteine intermediate is the Cys-369.

It belongs to the radical SAM superfamily. RlmN family. [4Fe-4S] cluster is required as a cofactor.

The protein resides in the cytoplasm. The enzyme catalyses adenosine(2503) in 23S rRNA + 2 reduced [2Fe-2S]-[ferredoxin] + 2 S-adenosyl-L-methionine = 2-methyladenosine(2503) in 23S rRNA + 5'-deoxyadenosine + L-methionine + 2 oxidized [2Fe-2S]-[ferredoxin] + S-adenosyl-L-homocysteine. The catalysed reaction is adenosine(37) in tRNA + 2 reduced [2Fe-2S]-[ferredoxin] + 2 S-adenosyl-L-methionine = 2-methyladenosine(37) in tRNA + 5'-deoxyadenosine + L-methionine + 2 oxidized [2Fe-2S]-[ferredoxin] + S-adenosyl-L-homocysteine. Specifically methylates position 2 of adenine 2503 in 23S rRNA and position 2 of adenine 37 in tRNAs. m2A2503 modification seems to play a crucial role in the proofreading step occurring at the peptidyl transferase center and thus would serve to optimize ribosomal fidelity. The polypeptide is Dual-specificity RNA methyltransferase RlmN (Serratia proteamaculans (strain 568)).